Reading from the N-terminus, the 1442-residue chain is Cleavage and polyadenylation specificity factor subunit 1 (1442 aa).

It belongs to the CPSF1 family. In terms of assembly, component of the CPSF complex, at least composed of CPSF160, CPSF100, CPSF73-I, CPSF73-II, CPSF30, FY and FIPS5. Forms a complex with cleavage and polyadenylation specificity factor (CPSF) subunits FY, CPSF30, CPSF73-I, CPSF 73-II and CPSF100.

The protein resides in the nucleus. Its function is as follows. CPSF plays a key role in pre-mRNA 3'-end formation, recognizing the AAUAAA signal sequence and interacting with poly(A)polymerase and other factors to bring about cleavage and poly(A) addition. This subunit is involved in the RNA recognition step of the polyadenylation reaction. The protein is Cleavage and polyadenylation specificity factor subunit 1 (CPSF160) of Arabidopsis thaliana (Mouse-ear cress).